We begin with the raw amino-acid sequence, 77 residues long: UPF0401 protein UTI89_C4989 (77 aa).

This sequence belongs to the UPF0401 family.

The polypeptide is UPF0401 protein UTI89_C4989 (Escherichia coli (strain UTI89 / UPEC)).